We begin with the raw amino-acid sequence, 344 residues long: MTSIRLTQYSHGAGCGCKISPSVLDVMLKSSLALPVNDALLVGNSTKDDAAVFDIGNDQGVISTTDFFMPIVDDPTDFGKIAACNAISDIYAMGGKPIMAIAILGWPVNLLAPEIAQQVLDGARAICAEAGIPLAGGHSIDAPEPIFGLAVTGLINNAHIKRNNTAEVGDLLYLTKPLGIGIMTTAEKQGKLLPEHAQLAPQAMKTLNVIGQKFAELEVVTAMTDVTGFALLGHLLEMCQGSGVAAVIDFEQVPRLDFVNDYIDQGCVPGGCERNFISYGEHVGPLSPKQKILLCDPQTSGGLLVAVKPQGKEAFEALCQENGLNLQPIGELVAATSPTVSLLS.

Cysteine 15 is an active-site residue. ATP is bound by residues lysine 18 and 46–48 (TKD). Aspartate 49 serves as a coordination point for Mg(2+). Residues aspartate 66, aspartate 89, and 137-139 (GHS) each bind ATP. Aspartate 89 provides a ligand contact to Mg(2+). Aspartate 225 is a binding site for Mg(2+).

The protein belongs to the selenophosphate synthase 1 family. Class I subfamily. Homodimer. Requires Mg(2+) as cofactor.

The catalysed reaction is hydrogenselenide + ATP + H2O = selenophosphate + AMP + phosphate + 2 H(+). Its function is as follows. Synthesizes selenophosphate from selenide and ATP. This is Selenide, water dikinase from Colwellia psychrerythraea (strain 34H / ATCC BAA-681) (Vibrio psychroerythus).